The chain runs to 88 residues: Small ribosomal subunit protein uS15 (88 aa).

It belongs to the universal ribosomal protein uS15 family. In terms of assembly, part of the 30S ribosomal subunit. Forms a bridge to the 50S subunit in the 70S ribosome, contacting the 23S rRNA.

Functionally, one of the primary rRNA binding proteins, it binds directly to 16S rRNA where it helps nucleate assembly of the platform of the 30S subunit by binding and bridging several RNA helices of the 16S rRNA. Its function is as follows. Forms an intersubunit bridge (bridge B4) with the 23S rRNA of the 50S subunit in the ribosome. The polypeptide is Small ribosomal subunit protein uS15 (Borreliella afzelii (strain PKo) (Borrelia afzelii)).